The following is a 972-amino-acid chain: MSEDVLLEEDIWEYKSIRKRKPQSNPDSTSVSMQTVTKGKCRPKRKGSGNRKKSVEKNSTPQKSEQRLRPSEDLDPCKDDSSVYAQESVSSLTEQGSPSTRPVCDGYCPSCQMPFSLLVVQTPRWHVAECLDTPGSVEKECPDGLLCTSTIPSHYKRYSHFLLAASRAGEYLVNSTANTVERKMTCSTAAKSSCFPSPVEDSQAEKPSKNLKNVPNNECTSKIKDSEQRKSLNITSESTSSFADVQKPQQVFQLTQTTDNSCKFEFYDFTSSQESVSEDLCSQKDTSQPSLLQSKADFSDWEISYSPLSTCEESEGEAEEEKEVKTSQNKLLKVQNFEGPESNTEVFKFKKQHCEEINTSSCLYHSEKSASQSHVDSKCSNSPCVDNQQEMLSAESSFPLNCNQEFQQPGLLSPAINTGNKESQDKGACVLDSVYSCLTRTQSLLLTEGGRSPLSQKNKVLRAPSVVLTNTDKMTADATEKGTCQESLQPAVKKEENLDSTGVCFPSPISKTVSSHSLASMNAKSSPAKELKQMDIGVFFGLKPKVKEESKGEACLSEGKQIPSSVAPSGKRPRQQKRKAEGSVEDLEAVEESSNKDGGDANVTSGGQRKWRKRFRESSTTDEGARKKQCPFYKKIPGTGFTVDAFQYGEIEGCTAYFLTHFHSDHYCGLTKNFVFPLYCNKITGNLVKSKLRVKEQYINVLPMDTECIVNGIKVLLLDANHCPGATMILFYLPSGTAILHTGDFRADPSMERYPALIGQKIHTLYLDTTYCSPEYTFPSQQEVIQFAVNTAFEMVTLNPRTLVVCGTYSIGKEKVFLAIAEVLGSKASMSRDKYKTLQCLESAAVNSLITMNWDGTLLHILPMMQINFKGLQDHLNKFSENFDQVLAFKPTGWTYSDSCLSVMDIKPQTRGNITIYGIPYSEHSSYLEMKRFVQWLKPQKIIPTVNVGDWRARSLMEKHFRDWMIEGSGHK.

Positions 14–80 (YKSIRKRKPQ…SEDLDPCKDD (67 aa)) are disordered. Polar residues predominate over residues 23–37 (QSNPDSTSVSMQTVT). Residues 39–54 (GKCRPKRKGSGNRKKS) are compositionally biased toward basic residues. Basic and acidic residues predominate over residues 64–80 (SEQRLRPSEDLDPCKDD). The UBZ4-type zinc-finger motif lies at 105-135 (DGYCPSCQMPFSLLVVQTPRWHVAECLDTPG). Residues Cys108, Cys111, His126, and Cys130 each contribute to the Zn(2+) site. Disordered stretches follow at residues 191 to 219 (KSSCFPSPVEDSQAEKPSKNLKNVPNNEC) and 552 to 623 (GEAC…TTDE). The span at 210–219 (NLKNVPNNEC) shows a compositional bias: polar residues.

This sequence belongs to the DNA repair metallo-beta-lactamase (DRMBL) family. As to quaternary structure, binds PIAS1.

It is found in the nucleus. It carries out the reaction a beta-lactam + H2O = a substituted beta-amino acid. May be required for DNA interstrand cross-link repair. The sequence is that of DNA cross-link repair 1A protein (DCLRE1A) from Gallus gallus (Chicken).